The following is an 89-amino-acid chain: Mu-like prophage FluMu DNA-binding protein Ner (89 aa).

The H-T-H motif DNA-binding region spans Glu57 to Phe76.

It belongs to the ner transcriptional regulatory family.

Negative regulator of transcription starting from the Pe and Pc promoters of Mu. Also negatively regulates its own gene transcription. This Haemophilus influenzae (strain ATCC 51907 / DSM 11121 / KW20 / Rd) protein is Mu-like prophage FluMu DNA-binding protein Ner (nlp).